The sequence spans 179 residues: Macro domain-containing protein XAC3343 (179 aa).

Residues 1 to 175 (MRIEVWQGDI…AYQQALATQE (175 aa)) enclose the Macro domain.

The protein belongs to the MacroD-type family.

In Xanthomonas axonopodis pv. citri (strain 306), this protein is Macro domain-containing protein XAC3343.